Consider the following 119-residue polypeptide: Ribonuclease P protein component (119 aa).

This sequence belongs to the RnpA family. In terms of assembly, consists of a catalytic RNA component (M1 or rnpB) and a protein subunit.

It carries out the reaction Endonucleolytic cleavage of RNA, removing 5'-extranucleotides from tRNA precursor.. Functionally, RNaseP catalyzes the removal of the 5'-leader sequence from pre-tRNA to produce the mature 5'-terminus. It can also cleave other RNA substrates such as 4.5S RNA. The protein component plays an auxiliary but essential role in vivo by binding to the 5'-leader sequence and broadening the substrate specificity of the ribozyme. This Aromatoleum aromaticum (strain DSM 19018 / LMG 30748 / EbN1) (Azoarcus sp. (strain EbN1)) protein is Ribonuclease P protein component.